The sequence spans 173 residues: Dual-action ribosomal maturation protein DarP (173 aa).

The protein belongs to the DarP family.

It localises to the cytoplasm. In terms of biological role, member of a network of 50S ribosomal subunit biogenesis factors which assembles along the 30S-50S interface, preventing incorrect 23S rRNA structures from forming. Promotes peptidyl transferase center (PTC) maturation. The chain is Dual-action ribosomal maturation protein DarP from Pseudomonas fluorescens (strain ATCC BAA-477 / NRRL B-23932 / Pf-5).